Consider the following 494-residue polypeptide: Protein translocase subunit SecD (494 aa).

Transmembrane regions (helical) follow at residues 7–27 (WFALLIALVISAFLLCINLPF), 322–342 (LIAALLGLSLVAIFMVSFYRL), 345–365 (FIAIFALSFYALFNIAIYALI), 372–392 (PGVAGFVLSIGMAVDANVLIF), 420–440 (IIDGHITTLISCISLFYLGTG), and 441–461 (FVKGFAATLGIGVFISLFTAL).

Belongs to the SecD/SecF family. SecD subfamily. In terms of assembly, forms a complex with SecF. Part of the essential Sec protein translocation apparatus which comprises SecA, SecYEG and auxiliary proteins SecDF. Other proteins may also be involved.

The protein localises to the cell inner membrane. Part of the Sec protein translocase complex. Interacts with the SecYEG preprotein conducting channel. SecDF uses the proton motive force (PMF) to complete protein translocation after the ATP-dependent function of SecA. Its function is as follows. Probably participates in protein translocation into and across both the cytoplasmic and thylakoid membranes in cyanobacterial cells. The sequence is that of Protein translocase subunit SecD from Prochlorococcus marinus (strain SARG / CCMP1375 / SS120).